Here is a 379-residue protein sequence, read N- to C-terminus: Alkanesulfonate monooxygenase (379 aa).

Belongs to the SsuD family.

The catalysed reaction is an alkanesulfonate + FMNH2 + O2 = an aldehyde + FMN + sulfite + H2O + 2 H(+). In terms of biological role, catalyzes the desulfonation of aliphatic sulfonates. The polypeptide is Alkanesulfonate monooxygenase (Pseudomonas syringae pv. tomato (strain ATCC BAA-871 / DC3000)).